Consider the following 206-residue polypeptide: MAPSHLSVREVREDEKPLVLEMLKAGVKDTENRVALHALTRPPALLLLAAASSGLRFVLASFALALLLPVFLAVTAVKLGLRARWGSLPPPGGLGGPWVAVRGSGDVCGVLALAPGTNAGDGARVTRLSVSRWHRRRGVGRRLLAFAEARARAWAGGMGEPRARLVVPVAVAAWGVAGMLEGCGYQAEGGWGCLGYTLVREFSKDL.

The 152-residue stretch at 55-206 (LRFVLASFAL…TLVREFSKDL (152 aa)) folds into the N-acetyltransferase domain. The chain crosses the membrane as a helical span at residues 57–77 (FVLASFALALLLPVFLAVTAV).

It belongs to the camello family.

The protein localises to the membrane. Functionally, probable acetyltransferase. May act as a transcription factor regulating the expression of coproporphyrinogen oxidase by binding to a promoter regulatory element. The chain is Probable N-acetyltransferase 14 (NAT14) from Macaca fascicularis (Crab-eating macaque).